The chain runs to 385 residues: Lysine 6-dehydrogenase (385 aa).

This sequence belongs to the saccharopine dehydrogenase family. As to quaternary structure, homohexamer.

It catalyses the reaction L-lysine + NAD(+) = L-1-piperideine-6-carboxylate + NH4(+) + NADH + 2 H(+). Functionally, catalyzes the oxidative deamination of L-lysine in the presence of NAD. Can also use (S)-(2-aminoethyl)-L-cysteine as a substrate, but more slowly. Can use both NAD and NADP but the preferred substrate is NAD. This Geobacillus stearothermophilus (Bacillus stearothermophilus) protein is Lysine 6-dehydrogenase (lysDH).